The primary structure comprises 1342 residues: DNA-directed RNA polymerase subunit beta (1342 aa).

The protein belongs to the RNA polymerase beta chain family. In terms of assembly, the RNAP catalytic core consists of 2 alpha, 1 beta, 1 beta' and 1 omega subunit. When a sigma factor is associated with the core the holoenzyme is formed, which can initiate transcription.

The enzyme catalyses RNA(n) + a ribonucleoside 5'-triphosphate = RNA(n+1) + diphosphate. Its function is as follows. DNA-dependent RNA polymerase catalyzes the transcription of DNA into RNA using the four ribonucleoside triphosphates as substrates. This Pectobacterium atrosepticum (strain SCRI 1043 / ATCC BAA-672) (Erwinia carotovora subsp. atroseptica) protein is DNA-directed RNA polymerase subunit beta.